A 141-amino-acid polypeptide reads, in one-letter code: Translation initiation factor 2 subunit beta (141 aa).

Belongs to the eIF-2-beta/eIF-5 family. Heterotrimer composed of an alpha, a beta and a gamma chain.

In terms of biological role, eIF-2 functions in the early steps of protein synthesis by forming a ternary complex with GTP and initiator tRNA. The protein is Translation initiation factor 2 subunit beta of Thermofilum pendens (strain DSM 2475 / Hrk 5).